Here is a 1065-residue protein sequence, read N- to C-terminus: MSVSTVGGDVRVTRWVATIAGLIGFVLSVATPLLPVVQTTATLNWPQGGQLNSVTAPLISLTPVDLTATVPCSLVRDLPPGGGVILSTGPKKGKDAALNALFVVAHGKRVDVTDRNVVIASASRDQVAGAGCSRIEIASTRAGTFATFVGLTDPAGKPLGGGFPDPNLRPQIVGVFTDLTGPAPAGLKLSATIDTRFSTTPTTLKLAAMVTAILATIVALVALWRLDQLDGHRMRRLIPANWRTFTLADVAVIFGFVLWHVIGANSSDDGYILGMARVADRAGYMSNYFRWFGSPEDPFGWYYNLLALMTHVSDASLWMRLPDLFAGIVCWLLLSREVLPRLGPAVAASRPANWAAGMVLLTAWMPFDNGLRPEPIIALGSLVTYVLIERSMRYSRLTPAALAVITAAFTLGVQPTGLIAVAALVAGGRPILRILVRRHRVVGTWPLVAPMLAAGTVILTVVFADQTLATVLEATRIRTAIGPSQAWYTENLRYYYLILPTVDGSLSRRFGFLITALCLFTAVFIMLRRKRIPGVARGPAWRLMGVIFGTMFFLMFTPTKWVHHFGLFAAVGAAMAALTTVLVSPAVLGWSRNRMAFLAALLFMMALCFATTNGWWYVSSYGVPFNSTMPKIGGITVSTVFFSMFVAAALYAIWLHFASREHGEGRLARALTAAPVPLAAGFMALVFIASMVAGIVRQYPTYSNAWDNLREFSGGCGLADDVLVEPDSNVGYMTPLGGDYGPLGPLGGQHPVGFSPNGVPEHTVAEAIRITPNQPGTDYDWDAPTKLSAPGINGSTVPLPYGLDAARVPLAGSYTTGAQQQSRLTSAWYRLPAPDDGHPLVVVTAAGKIAGNSVLHHHTDGQTVVLEYGRPGPGGDIVPAGRLVPYDLYGEQPKAWRNLRFARSDMPADTVAVRVVAEDLSLTPEDWIAVTPPRVPEMRSLQEYVGSTQPVLMDWAVGLAFPCQQPMLHVNGVTEIPKFRITPDYTAKKMDTDTWEDGTNGGLLGITDLLLRAHVMSTYLSHDWGRDWGSLRRFETIADAHPAQLDLGTATRTGWWSPGPIRIKP.

12 helical membrane passes run 15–37 (WVATIAGLIGFVLSVATPLLPVV), 204–226 (LKLAAMVTAILATIVALVALWRL), 241–263 (NWRTFTLADVAVIFGFVLWHVIG), 394–413 (YSRLTPAALAVITAAFTLGV), 417–436 (GLIAVAALVAGGRPILRILV), 441–463 (VVGTWPLVAPMLAAGTVILTVVF), 510–527 (FGFLITALCLFTAVFIML), 540–557 (AWRLMGVIFGTMFFLMFT), 567–589 (LFAAVGAAMAALTTVLVSPAVLG), 596–618 (AFLAALLFMMALCFATTNGWWYV), 633–655 (GGITVSTVFFSMFVAAALYAIWL), and 667–689 (LARALTAAPVPLAAGFMALVFIA).

This sequence belongs to the emb family.

It is found in the cell membrane. Its function is as follows. Arabinosyl transferase responsible for the polymerization of arabinose into the arabinan of arabinogalactan. This is Probable arabinosyltransferase B (embB) from Mycobacterium avium.